The chain runs to 440 residues: MDQLAHHYRAHIAELNRRVAEILSREALSGLVIHSGQPHRMFLDDINYPFKANPHFKAWLPVLDNPNCWLVVNGRDKPQLIFYRPVDFWHKVSDVPDMFWTEHFDIKLLTKADKVAELLPKDTVNWAYLGEHLDVAEVLGFTSRNPDAVMSYLHYHRTTKTEYELECMRRANQIAVQGHLAAKNAFYNGASEFEIQQHYLSAVGQSENEVPYGNIIALNQNAAILHYTALEHQSPAKRLSFLIDAGASYFGYASDITRTYAFEKNRFDELIAAMNKAQLELIDMMRPGVRYPDLHLATHAKVAQMLLDFDLATGDAQGLVDQGITSAFFPHGLGHMLGLQVHDVGGFSHDERGTHIAAPEAHPFLRCTRILAPNQVLTMEPGLYIIDTLLNELKQDSRGLQINWQTVDELRPFGGIRIEDNVIVHQDRNENMTRELGLAD.

Residues Asp244, Asp255, His335, Glu380, and Glu419 each contribute to the Mn(2+) site.

This sequence belongs to the peptidase M24B family. Bacterial-type prolidase subfamily. Mn(2+) serves as cofactor.

The enzyme catalyses Xaa-L-Pro dipeptide + H2O = an L-alpha-amino acid + L-proline. In terms of biological role, splits dipeptides with a prolyl residue in the C-terminal position. The polypeptide is Xaa-Pro dipeptidase (Shewanella putrefaciens (strain CN-32 / ATCC BAA-453)).